A 376-amino-acid chain; its full sequence is Actin (376 aa).

This sequence belongs to the actin family.

Its subcellular location is the cytoplasm. The protein localises to the cytoskeleton. It carries out the reaction ATP + H2O = ADP + phosphate + H(+). Functionally, actins are highly conserved proteins that are involved in various types of cell motility and are ubiquitously expressed in all eukaryotic cells. In Trypanosoma cruzi, this protein is Actin.